Consider the following 238-residue polypeptide: Ubiquinone biosynthesis O-methyltransferase (238 aa).

Arginine 38, glycine 57, aspartate 78, and leucine 124 together coordinate S-adenosyl-L-methionine.

The protein belongs to the methyltransferase superfamily. UbiG/COQ3 family.

The enzyme catalyses a 3-demethylubiquinol + S-adenosyl-L-methionine = a ubiquinol + S-adenosyl-L-homocysteine + H(+). It catalyses the reaction a 3-(all-trans-polyprenyl)benzene-1,2-diol + S-adenosyl-L-methionine = a 2-methoxy-6-(all-trans-polyprenyl)phenol + S-adenosyl-L-homocysteine + H(+). The protein operates within cofactor biosynthesis; ubiquinone biosynthesis. Its function is as follows. O-methyltransferase that catalyzes the 2 O-methylation steps in the ubiquinone biosynthetic pathway. This Marinobacter nauticus (strain ATCC 700491 / DSM 11845 / VT8) (Marinobacter aquaeolei) protein is Ubiquinone biosynthesis O-methyltransferase.